Reading from the N-terminus, the 140-residue chain is Pre-mRNA-splicing factor NTC20 (140 aa).

S139 is modified (phosphoserine).

Belongs to the NTC complex (or PRP19-associated complex), composed of at least CEF1, CLF1, ISY1, NTC20, SNT309, SYF1, SYF2, and PRP19. The NTC complex associates with the spliceosome after the release of the U1 and U4 snRNAs and forms the CWC spliceosome subcomplex (or CEF1-associated complex) reminiscent of a late-stage spliceosome composed also of the U2, U5 and U6 snRNAs and at least BUD13, BRR2, CDC40, CUS1, CWC2, CWC15, CWC21, CWC22, CWC23, CWC24, CWC25, CWC27, ECM2, HSH155, IST3, LEA1, MSL1, PRP8, PRP9, PRP11, PRP21, PRP22, PRP45, PRP46, SLU7, SMB1, SMD1, SMD2, SMD3, SMX2, SMX3, SNU114, SPP2, RSE1 and YJU2. Interacts with CEF1, CLF1, ISY1, PRP46, and SYF1.

The protein resides in the nucleus. Involved in pre-mRNA splicing. As a component of the NTC complex, associates to the spliceosome to mediate conformational rearrangement or to stabilize the structure of the spliceosome after U4 snRNA dissociation, which leads to spliceosome maturation. The chain is Pre-mRNA-splicing factor NTC20 (NTC20) from Saccharomyces cerevisiae (strain ATCC 204508 / S288c) (Baker's yeast).